The sequence spans 307 residues: Ribonuclease Z (307 aa).

Zn(2+)-binding residues include H63, H65, D67, H68, H141, D212, and H270. Residue D67 is the Proton acceptor of the active site.

Belongs to the RNase Z family. As to quaternary structure, homodimer. Zn(2+) serves as cofactor.

The catalysed reaction is Endonucleolytic cleavage of RNA, removing extra 3' nucleotides from tRNA precursor, generating 3' termini of tRNAs. A 3'-hydroxy group is left at the tRNA terminus and a 5'-phosphoryl group is left at the trailer molecule.. In terms of biological role, zinc phosphodiesterase, which displays some tRNA 3'-processing endonuclease activity. Probably involved in tRNA maturation, by removing a 3'-trailer from precursor tRNA. This Bacillus cereus (strain G9842) protein is Ribonuclease Z.